We begin with the raw amino-acid sequence, 185 residues long: dCTP deaminase, dUMP-forming (185 aa).

DCTP contacts are provided by residues 99 to 104, D117, 125 to 127, Q146, Y159, K166, and Q170; these read KSSIAR and TLE. E127 functions as the Proton donor/acceptor in the catalytic mechanism.

It belongs to the dCTP deaminase family. As to quaternary structure, homotrimer.

It carries out the reaction dCTP + 2 H2O = dUMP + NH4(+) + diphosphate. The protein operates within pyrimidine metabolism; dUMP biosynthesis; dUMP from dCTP: step 1/1. Its function is as follows. Bifunctional enzyme that catalyzes both the deamination of dCTP to dUTP and the hydrolysis of dUTP to dUMP without releasing the toxic dUTP intermediate. The sequence is that of dCTP deaminase, dUMP-forming from Methanospirillum hungatei JF-1 (strain ATCC 27890 / DSM 864 / NBRC 100397 / JF-1).